We begin with the raw amino-acid sequence, 276 residues long: Large ribosomal subunit protein uL2 (276 aa).

Disordered regions lie at residues 14-58 (RNAS…GGGH) and 221-276 (TRGE…KNRK). The segment covering 16-27 (ASVSDFSELTRS) has biased composition (polar residues). Residues 255-276 (RRPKKASNKMIVRRRPSGKNRK) show a composition bias toward basic residues.

It belongs to the universal ribosomal protein uL2 family. As to quaternary structure, part of the 50S ribosomal subunit. Forms a bridge to the 30S subunit in the 70S ribosome.

Its function is as follows. One of the primary rRNA binding proteins. Required for association of the 30S and 50S subunits to form the 70S ribosome, for tRNA binding and peptide bond formation. It has been suggested to have peptidyltransferase activity; this is somewhat controversial. Makes several contacts with the 16S rRNA in the 70S ribosome. The sequence is that of Large ribosomal subunit protein uL2 from Bifidobacterium longum subsp. infantis (strain ATCC 15697 / DSM 20088 / JCM 1222 / NCTC 11817 / S12).